The sequence spans 441 residues: tRNA (adenine(37)-N6)-methyltransferase (441 aa).

Residues 30-168 (TEPVGYLESC…YIAEYDSPQN (139 aa)) form the TsaA-like domain. S-adenosyl-L-methionine-binding positions include 47–49 (PRQ), 90–91 (HK), Arg117, Leu127, and 148–151 (IHGT). Over residues 179–192 (QNNQHTPNTVSQSD) the composition is skewed to polar residues. Disordered regions lie at residues 179–231 (QNNQ…EENY) and 264–284 (SSVAEEQIGPYCPEKSFSEKG).

Belongs to the tRNA methyltransferase O family.

The catalysed reaction is N(6)-L-threonylcarbamoyladenosine(37) in tRNA + S-adenosyl-L-methionine = N(6)-methyl,N(6)-L-threonylcarbamoyladenosine(37) in tRNA + S-adenosyl-L-homocysteine + H(+). Its function is as follows. S-adenosyl-L-methionine-dependent methyltransferase responsible for the addition of the methyl group in the formation of N6-methyl-N6-threonylcarbamoyladenosine at position 37 (m(6)t(6)A37) of the tRNA anticodon loop of tRNA(Ser)(GCU). The methyl group of m(6)t(6)A37 may improve the efficiency of the tRNA decoding ability. The chain is tRNA (adenine(37)-N6)-methyltransferase from Homo sapiens (Human).